The primary structure comprises 409 residues: Ingression protein 1 (409 aa).

Positions 1–114 (MSEEVWNGNQ…DPKEGYCTWY (114 aa)) constitute a C2 domain. The interval 300–409 (LSYDEDDDDD…TRKRPPPRLS (110 aa)) is disordered. Over residues 302-313 (YDEDDDDDDEND) the composition is skewed to acidic residues. Positions 315–328 (FYSSSHRVSHNYNQ) are enriched in polar residues. Residues 360–377 (LDSSSPNSHPHPSGLNSP) are compositionally biased toward low complexity. Over residues 384 to 399 (TTSNSNFNSRKNSMSP) the composition is skewed to polar residues. Serine 392 carries the post-translational modification Phosphoserine. The span at 400-409 (TRKRPPPRLS) shows a compositional bias: basic residues.

The protein belongs to the INN1/fic1 family. In terms of assembly, interacts with CYK2, CYK3 and IQG1.

It is found in the bud neck. Functionally, required for the ingression of the plasma membrane into the bud neck at the end of cytokinesis, leading to the separation of the mother and daughter cells. Stimulates the synthesis of the primary septum (PS) by CHS2. The protein is Ingression protein 1 (INN1) of Saccharomyces cerevisiae (strain ATCC 204508 / S288c) (Baker's yeast).